A 1801-amino-acid chain; its full sequence is Sperm flagellar protein 2 (1801 aa).

The Calponin-homology (CH) domain occupies 1–105 (MSEILCQWLN…LLYQLYIALQ (105 aa)). Coiled coils occupy residues 176–260 (EKFE…KDLQ) and 321–395 (AHEA…TKQA). The segment at 632 to 659 (QDKNELTDTQVPGEAAPQKEGTKSSDFE) is disordered. Coiled coils occupy residues 722–748 (NQAK…KAQM) and 869–895 (ATEV…SAVS). Composition is skewed to basic and acidic residues over residues 883–892 (LEEKETEKKS) and 909–918 (EAEKEKEVHQ). The tract at residues 883 to 949 (LEEKETEKKS…KISVKKSPID (67 aa)) is disordered. Residues 1051–1077 (EDLWEDEETKAELHQRVNDLRDRLWDI) adopt a coiled-coil conformation. Basic and acidic residues-rich tracts occupy residues 1233–1250 (RLAE…KEKS) and 1261–1295 (KEKE…AEKK). Disordered stretches follow at residues 1233 to 1304 (RLAE…SPVV), 1651 to 1695 (KTSI…NANT), and 1781 to 1801 (SEHA…DEKK). Residues 1252-1286 (QSGTNKKAKKEKEQAKKEKEQAKKEKEQAKKEKEP) are a coiled coil. The segment at 1305–1657 (EVSPVTITPE…TAEKTSISSV (353 aa)) is interaction with IFT20. Positions 1665–1695 (EAEENSTREELKEEKDERDQKEEEIPENANT) form a coiled coil. Over residues 1669 to 1687 (NSTREELKEEKDERDQKEE) the composition is skewed to basic and acidic residues.

In terms of assembly, interacts (via C-terminus) with IFT20. Interacts with DYNC1I2. In terms of tissue distribution, predominantly expressed in ciliated tissues such as lung, trachea, testis, brain, and at lower levels in kidney and spleen.

It localises to the cell projection. The protein localises to the cilium. Its subcellular location is the flagellum. It is found in the cytoplasm. The protein resides in the golgi apparatus. In terms of biological role, required for correct axoneme development in spermatozoa. Important for normal development of the manchette and sperm head morphology. Essential for male fertility. Plays a role in localization of the intraflagellar transport protein IFT20 to the manchette, suggesting function as an adapter for dynein-mediated protein transport during spermatogenesis. Also plays a role in bone growth where it seems to be required for normal osteoblast differentiation. This Rattus norvegicus (Rat) protein is Sperm flagellar protein 2 (Spef2).